Here is a 279-residue protein sequence, read N- to C-terminus: Energy-coupling factor transporter ATP-binding protein EcfA2 (279 aa).

An ABC transporter domain is found at 3-245 (ITLKNVSYTY…LDFMESIQLG (243 aa)). ATP is bound at residue 40-47 (GHTGSGKS).

Belongs to the ABC transporter superfamily. Energy-coupling factor EcfA family. In terms of assembly, forms a stable energy-coupling factor (ECF) transporter complex composed of 2 membrane-embedded substrate-binding proteins (S component), 2 ATP-binding proteins (A component) and 2 transmembrane proteins (T component).

The protein resides in the cell membrane. ATP-binding (A) component of a common energy-coupling factor (ECF) ABC-transporter complex. Unlike classic ABC transporters this ECF transporter provides the energy necessary to transport a number of different substrates. This Streptococcus sanguinis (strain SK36) protein is Energy-coupling factor transporter ATP-binding protein EcfA2.